The chain runs to 200 residues: Prolactin (200 aa).

Cystine bridges form between C4–C11, C59–C175, and C192–C200.

This sequence belongs to the somatotropin/prolactin family. In terms of tissue distribution, pituitary gland.

It is found in the secreted. In Protopterus aethiopicus (Marbled lungfish), this protein is Prolactin (prl).